A 223-amino-acid polypeptide reads, in one-letter code: Adenylate kinase (223 aa).

17–22 contacts ATP; it reads GAGKGT. The segment at 37 to 66 is NMP; the sequence is STGDMLRSQVAKGTPLGVEAKKIMDQGGLV. Residues T38, R43, 64-66, 93-96, and Q100 contribute to the AMP site; these read GLV and GFPR. An LID region spans residues 134 to 171; that stretch reads GRLVHPSSGRSYHKLFNPPKVEMTDDVTGEPLVQRSDD. ATP is bound by residues R135 and 144–145; that span reads SY. R168 and R179 together coordinate AMP. Q207 provides a ligand contact to ATP.

The protein belongs to the adenylate kinase family. AK2 subfamily. In terms of assembly, monomer.

The protein localises to the cytoplasm. The protein resides in the cytosol. It localises to the mitochondrion intermembrane space. The catalysed reaction is AMP + ATP = 2 ADP. Functionally, catalyzes the reversible transfer of the terminal phosphate group between ATP and AMP. Plays an important role in cellular energy homeostasis and in adenine nucleotide metabolism. Adenylate kinase activity is critical for regulation of the phosphate utilization and the AMP de novo biosynthesis pathways. The chain is Adenylate kinase from Vanderwaltozyma polyspora (strain ATCC 22028 / DSM 70294 / BCRC 21397 / CBS 2163 / NBRC 10782 / NRRL Y-8283 / UCD 57-17) (Kluyveromyces polysporus).